Here is a 91-residue protein sequence, read N- to C-terminus: UPF0250 protein PSPTO_4820 (91 aa).

The protein belongs to the UPF0250 family.

The polypeptide is UPF0250 protein PSPTO_4820 (Pseudomonas syringae pv. tomato (strain ATCC BAA-871 / DC3000)).